We begin with the raw amino-acid sequence, 204 residues long: Superoxide dismutase [Mn] (204 aa).

The Mn(2+) site is built by histidine 29, histidine 84, aspartate 167, and histidine 171.

It belongs to the iron/manganese superoxide dismutase family. Homotetramer. It depends on Mn(2+) as a cofactor.

The enzyme catalyses 2 superoxide + 2 H(+) = H2O2 + O2. Its function is as follows. Destroys superoxide anion radicals which are normally produced within the cells and which are toxic to biological systems. This Thermus thermophilus (strain ATCC BAA-163 / DSM 7039 / HB27) protein is Superoxide dismutase [Mn] (sodA).